A 246-amino-acid chain; its full sequence is Enolase-phosphatase E1 (246 aa).

2 residues coordinate Mg(2+): aspartate 15 and glutamate 17. Residues 134–135 (SS) and lysine 174 each bind substrate. Mg(2+) is bound at residue aspartate 201.

This sequence belongs to the HAD-like hydrolase superfamily. MasA/MtnC family. In terms of assembly, monomer. The cofactor is Mg(2+).

It localises to the cytoplasm. It is found in the nucleus. It carries out the reaction 5-methylsulfanyl-2,3-dioxopentyl phosphate + H2O = 1,2-dihydroxy-5-(methylsulfanyl)pent-1-en-3-one + phosphate. It participates in amino-acid biosynthesis; L-methionine biosynthesis via salvage pathway; L-methionine from S-methyl-5-thio-alpha-D-ribose 1-phosphate: step 3/6. Its pathway is amino-acid biosynthesis; L-methionine biosynthesis via salvage pathway; L-methionine from S-methyl-5-thio-alpha-D-ribose 1-phosphate: step 4/6. Bifunctional enzyme that catalyzes the enolization of 2,3-diketo-5-methylthiopentyl-1-phosphate (DK-MTP-1-P) into the intermediate 2-hydroxy-3-keto-5-methylthiopentenyl-1-phosphate (HK-MTPenyl-1-P), which is then dephosphorylated to form the acireductone 1,2-dihydroxy-3-keto-5-methylthiopentene (DHK-MTPene). This chain is Enolase-phosphatase E1, found in Debaryomyces hansenii (strain ATCC 36239 / CBS 767 / BCRC 21394 / JCM 1990 / NBRC 0083 / IGC 2968) (Yeast).